The sequence spans 110 residues: UPF0060 membrane protein Veis_0342 (110 aa).

4 consecutive transmembrane segments (helical) span residues 8–28 (VLFTITAVVEIVGCYLPWLVI), 33–53 (PLWLLLPAALSLALFAWLLTL), 63–83 (AAYGGIYIAVALAWLHWVDGV), and 90–110 (VAGATVAMVGMLIIMLQPASA).

Belongs to the UPF0060 family.

It is found in the cell inner membrane. This is UPF0060 membrane protein Veis_0342 from Verminephrobacter eiseniae (strain EF01-2).